A 472-amino-acid chain; its full sequence is P2X purinoceptor 2 (472 aa).

At 1–34 (MVRRLARGCWSAFWDYETPKVIVVRNRRLGFVHR) the chain is on the cytoplasmic side. Intrachain disulfides connect Cys9-Cys430, Cys113-Cys164, Cys124-Cys147, Cys130-Cys158, Cys214-Cys224, and Cys258-Cys267. Residues 35 to 52 (MVQLLILLYFVWYVFIVQ) traverse the membrane as a helical segment. The Extracellular segment spans residues 53–326 (KSYQDSETGP…IVHGQAGKFS (274 aa)). ATP is bound by residues Lys69 and Lys71. An N-linked (GlcNAc...) asparagine glycan is attached at Asn182. Thr184 contributes to the ATP binding site. A glycan (N-linked (GlcNAc...) asparagine) is linked at Asn239. Ser284, Asn288, and Arg290 together coordinate ATP. Asn298 carries N-linked (GlcNAc...) asparagine glycosylation. Position 308 (Lys308) interacts with ATP. A pore-forming motif region spans residues 309–322 (AYGIRIDVIVHGQA). Residues 327 to 347 (LIPTIINLATALTSIGVGSFL) traverse the membrane as a helical segment. Residues 348–472 (CDWILLTFMN…STDPKGLAQL (125 aa)) lie on the Cytoplasmic side of the membrane. The tract at residues 393-472 (PPPSHYSQDQ…STDPKGLAQL (80 aa)) is disordered. A compositionally biased stretch (polar residues) spans 456–465 (PSQQDSTSTD).

Belongs to the P2X receptor family. In terms of assembly, homotrimer and heterotrimer; functional P2XRs are organized as homomeric and heteromeric trimers. Homotrimer. Forms heterotrimer with P2RX1. Forms heterotrimer with P2RX6. Forms heterotrimer with P2RX3. In terms of tissue distribution, high levels in pituitary and vas deferens. Lower extent in spinal cord, bladder, brain, adrenal, testis, sensory epithelia from the inner ear.

It localises to the cell membrane. The catalysed reaction is Ca(2+)(in) = Ca(2+)(out). It carries out the reaction K(+)(in) = K(+)(out). It catalyses the reaction Na(+)(in) = Na(+)(out). Its activity is regulated as follows. Fast activation by external ATP. Exhibits slow desensitization during prolonged ATP activation. Not sensitive to the ATP agonist:alpha/beta-methylene-ATP. Its function is as follows. ATP-gated nonselective transmembrane cation channel permeable to potassium, sodium and calcium. Activation by extracellular ATP induces a variety of cellular responses, such as excitatory postsynaptic responses in sensory neurons, neuromuscular junctions (NMJ) formation, hearing, perception of taste and peristalsis. In the inner ear, regulates sound transduction and auditory neurotransmission, outer hair cell electromotility, inner ear gap junctions, and K(+) recycling. Mediates synaptic transmission between neurons and from neurons to smooth muscle. This Rattus norvegicus (Rat) protein is P2X purinoceptor 2 (P2rx2).